Consider the following 627-residue polypeptide: uncharacterized protein (627 aa).

Disordered regions lie at residues 441–466 (EAVP…QGEN) and 608–627 (DLRG…TEDR). Positions 615 to 627 (DYERGKGESTEDR) are enriched in basic and acidic residues.

This is an uncharacterized protein from Homo sapiens (Human).